Here is a 642-residue protein sequence, read N- to C-terminus: tRNA uridine 5-carboxymethylaminomethyl modification enzyme MnmG (642 aa).

24–29 is a binding site for FAD; the sequence is GGGHAG. 284 to 298 contributes to the NAD(+) binding site; the sequence is GPRYCPSIEDKIHRF.

It belongs to the MnmG family. Homodimer. Heterotetramer of two MnmE and two MnmG subunits. Requires FAD as cofactor.

Its subcellular location is the cytoplasm. Its function is as follows. NAD-binding protein involved in the addition of a carboxymethylaminomethyl (cmnm) group at the wobble position (U34) of certain tRNAs, forming tRNA-cmnm(5)s(2)U34. This Psychrobacter sp. (strain PRwf-1) protein is tRNA uridine 5-carboxymethylaminomethyl modification enzyme MnmG.